Consider the following 181-residue polypeptide: Cytidylate kinase (181 aa).

12–20 (GLAGSGTTT) provides a ligand contact to ATP.

This sequence belongs to the cytidylate kinase family. Type 2 subfamily.

It is found in the cytoplasm. It catalyses the reaction CMP + ATP = CDP + ADP. It carries out the reaction dCMP + ATP = dCDP + ADP. This chain is Cytidylate kinase (cmk), found in Pyrococcus abyssi (strain GE5 / Orsay).